The sequence spans 248 residues: Proteasome subunit alpha (248 aa).

This sequence belongs to the peptidase T1A family. The 20S proteasome core is composed of 14 alpha and 14 beta subunits that assemble into four stacked heptameric rings, resulting in a barrel-shaped structure. The two inner rings, each composed of seven catalytic beta subunits, are sandwiched by two outer rings, each composed of seven alpha subunits. The catalytic chamber with the active sites is on the inside of the barrel. Has a gated structure, the ends of the cylinder being occluded by the N-termini of the alpha-subunits. Is capped at one or both ends by the proteasome regulatory ATPase, PAN.

The protein localises to the cytoplasm. The formation of the proteasomal ATPase PAN-20S proteasome complex, via the docking of the C-termini of PAN into the intersubunit pockets in the alpha-rings, triggers opening of the gate for substrate entry. Interconversion between the open-gate and close-gate conformations leads to a dynamic regulation of the 20S proteasome proteolysis activity. Its function is as follows. Component of the proteasome core, a large protease complex with broad specificity involved in protein degradation. In Methanothermobacter thermautotrophicus (strain ATCC 29096 / DSM 1053 / JCM 10044 / NBRC 100330 / Delta H) (Methanobacterium thermoautotrophicum), this protein is Proteasome subunit alpha.